A 214-amino-acid polypeptide reads, in one-letter code: Corrinoid adenosyltransferase (214 aa).

An ATP-binding site is contributed by 50-56; the sequence is GKGKGKS.

This sequence belongs to the Cob(I)alamin adenosyltransferase family. In terms of assembly, monomer. Mn(2+) serves as cofactor.

Its subcellular location is the cytoplasm. The enzyme catalyses 2 cob(II)yrinate a,c diamide + reduced [electron-transfer flavoprotein] + 2 ATP = 2 adenosylcob(III)yrinate a,c-diamide + 2 triphosphate + oxidized [electron-transfer flavoprotein] + 3 H(+). The catalysed reaction is 2 cob(II)alamin + reduced [electron-transfer flavoprotein] + 2 ATP = 2 adenosylcob(III)alamin + 2 triphosphate + oxidized [electron-transfer flavoprotein] + 3 H(+). It functions in the pathway cofactor biosynthesis; adenosylcobalamin biosynthesis; adenosylcobalamin from cob(II)yrinate a,c-diamide: step 2/7. In terms of biological role, required for both de novo synthesis of the corrin ring for the assimilation of exogenous corrinoids. Participates in the adenosylation of a variety of incomplete and complete corrinoids. This is Corrinoid adenosyltransferase (cobO) from Sinorhizobium sp.